A 159-amino-acid chain; its full sequence is Kojic acid related protein 6 (159 aa).

Functionally, negatively regulates mycelium growth and conidial formation and is required for stress tolerance. Plays a role in kojic acid synthesis in coordination with kojA, kojR and kojT where it acts upstream of kojA. In Aspergillus oryzae (strain ATCC 42149 / RIB 40) (Yellow koji mold), this protein is Kojic acid related protein 6.